The sequence spans 72 residues: Translation initiation factor IF-1 (72 aa).

The region spanning 1–72 (MAREDLIEVE…SRGRITYRKK (72 aa)) is the S1-like domain.

It belongs to the IF-1 family. As to quaternary structure, component of the 30S ribosomal translation pre-initiation complex which assembles on the 30S ribosome in the order IF-2 and IF-3, IF-1 and N-formylmethionyl-tRNA(fMet); mRNA recruitment can occur at any time during PIC assembly.

The protein resides in the cytoplasm. One of the essential components for the initiation of protein synthesis. Stabilizes the binding of IF-2 and IF-3 on the 30S subunit to which N-formylmethionyl-tRNA(fMet) subsequently binds. Helps modulate mRNA selection, yielding the 30S pre-initiation complex (PIC). Upon addition of the 50S ribosomal subunit IF-1, IF-2 and IF-3 are released leaving the mature 70S translation initiation complex. This is Translation initiation factor IF-1 from Acholeplasma laidlawii (strain PG-8A).